Here is a 617-residue protein sequence, read N- to C-terminus: uncharacterized protein (617 aa).

A helical transmembrane segment spans residues 10-30; the sequence is AFFFFFVSLILLFLSPSYSDV. A disordered region spans residues 34–58; sequence ESDPIPYENSDASPGVVTSSESDRQ. A compositionally biased stretch (polar residues) spans 43 to 53; that stretch reads SDASPGVVTSS. The stretch at 60–86 forms a coiled coil; the sequence is VSLHRLEELVRNLTELVARLDAKLSET. The helical transmembrane segment at 473 to 493 threads the bilayer; sequence MLWSSPVFFFILFLFGAWHFF. Residues 511-529 show a composition bias toward low complexity; it reads STTMSSSSTTTAQNSSAFS. Residues 511–617 form a disordered region; it reads STTMSSSSTT…GNNKALDDES (107 aa). Residues 531–543 are compositionally biased toward basic and acidic residues; that stretch reads STRRNDDHMDLRR. Residues 563 to 584 show a composition bias toward polar residues; that stretch reads VGSNDPSSRAPVETTNYRTTAQ. Positions 590–599 are enriched in gly residues; that stretch reads GGSGLDSGGF.

Its subcellular location is the membrane. This is an uncharacterized protein from Arabidopsis thaliana (Mouse-ear cress).